The following is a 210-amino-acid chain: Cytochrome c biogenesis ATP-binding export protein CcmA (210 aa).

Residues Leu-3–Thr-209 form the ABC transporter domain. Gly-35–Thr-42 contacts ATP.

Belongs to the ABC transporter superfamily. CcmA exporter (TC 3.A.1.107) family. As to quaternary structure, the complex is composed of two ATP-binding proteins (CcmA) and two transmembrane proteins (CcmB).

Its subcellular location is the cell inner membrane. It catalyses the reaction heme b(in) + ATP + H2O = heme b(out) + ADP + phosphate + H(+). In terms of biological role, part of the ABC transporter complex CcmAB involved in the biogenesis of c-type cytochromes; once thought to export heme, this seems not to be the case, but its exact role is uncertain. Responsible for energy coupling to the transport system. The polypeptide is Cytochrome c biogenesis ATP-binding export protein CcmA (Cereibacter sphaeroides (strain ATCC 17023 / DSM 158 / JCM 6121 / CCUG 31486 / LMG 2827 / NBRC 12203 / NCIMB 8253 / ATH 2.4.1.) (Rhodobacter sphaeroides)).